A 177-amino-acid chain; its full sequence is Small ribosomal subunit protein bS16 (177 aa).

The disordered stretch occupies residues 80-177 (GIIAMPANGS…AAEAPKEEAK (98 aa)). Positions 107-122 (AAPAAAPKAEAAPAAE) are enriched in low complexity.

The protein belongs to the bacterial ribosomal protein bS16 family.

This is Small ribosomal subunit protein bS16 from Pelagibacter ubique (strain HTCC1062).